We begin with the raw amino-acid sequence, 263 residues long: Shikimate dehydrogenase (NADP(+)) (263 aa).

Shikimate contacts are provided by residues 16–18 and T65; that span reads SKS. The active-site Proton acceptor is K69. Residues N90 and D105 each contribute to the shikimate site. NADP(+) contacts are provided by residues 125-129 and L208; that span reads GSGGS. Y210 is a binding site for shikimate. G230 contributes to the NADP(+) binding site.

Belongs to the shikimate dehydrogenase family. Homodimer.

The enzyme catalyses shikimate + NADP(+) = 3-dehydroshikimate + NADPH + H(+). Its pathway is metabolic intermediate biosynthesis; chorismate biosynthesis; chorismate from D-erythrose 4-phosphate and phosphoenolpyruvate: step 4/7. Functionally, involved in the biosynthesis of the chorismate, which leads to the biosynthesis of aromatic amino acids. Catalyzes the reversible NADPH linked reduction of 3-dehydroshikimate (DHSA) to yield shikimate (SA). The sequence is that of Shikimate dehydrogenase (NADP(+)) from Helicobacter pylori (strain G27).